The sequence spans 275 residues: Translation initiation factor 2 subunit alpha (275 aa).

The S1 motif domain maps to 12-83 (GEFVIATVKS…NKGHIDLSLK (72 aa)).

Belongs to the eIF-2-alpha family. In terms of assembly, heterotrimer composed of an alpha, a beta and a gamma chain.

In terms of biological role, eIF-2 functions in the early steps of protein synthesis by forming a ternary complex with GTP and initiator tRNA. In Thermococcus onnurineus (strain NA1), this protein is Translation initiation factor 2 subunit alpha.